Here is a 491-residue protein sequence, read N- to C-terminus: Probable cytosol aminopeptidase (491 aa).

Mn(2+) is bound by residues Lys263 and Asp268. The active site involves Lys275. Residues Asp286, Asp345, and Glu347 each coordinate Mn(2+). Arg349 is an active-site residue.

The protein belongs to the peptidase M17 family. Requires Mn(2+) as cofactor.

It is found in the cytoplasm. The enzyme catalyses Release of an N-terminal amino acid, Xaa-|-Yaa-, in which Xaa is preferably Leu, but may be other amino acids including Pro although not Arg or Lys, and Yaa may be Pro. Amino acid amides and methyl esters are also readily hydrolyzed, but rates on arylamides are exceedingly low.. It carries out the reaction Release of an N-terminal amino acid, preferentially leucine, but not glutamic or aspartic acids.. Presumably involved in the processing and regular turnover of intracellular proteins. Catalyzes the removal of unsubstituted N-terminal amino acids from various peptides. The protein is Probable cytosol aminopeptidase of Haemophilus influenzae (strain PittGG).